The chain runs to 497 residues: MRACPFLLLLLLPLLLSLGRIAAVRDAAGAGPERRQDDSVSQVQKLREEPSKVRDLQVKFIVRTTPDLDDADCYITAGQDHLLDDCNFNVSAKTFFVIHGWTMGGMYERWLDTLVSALQEREKEANVVVVNWLALAQQLYTIAVNNTRVVGKELAGLLDWLEEKKDFQLKNVHLIGYSLGAHIAGYTGNYARGIIGRITGLDPAGPMFEGADPSRRLSPDDADFVDVLHTYTRETLGISIGIQMPVGHIDIYPNGGDIQPGCGLTDILGTLALGEIGDLVICEHERSVHLFVDSLVNKDKQSFAFQCTDSGRFKKGICLSCRKNRCNSIGYNIKKMRNKRNSKMYLKTRAGMPFKVFHYQLKIHVFSYKSLGETEPSFSVTFYGTSGDSEPLPLEVSDQIGLNYTNTFLVYTEEDVGDILRIKLTWESTTQSWYNFWSQMKNYWSKPDPSSKELQIRRIRVKSGETQKKAMLAVEFWELKSTCLKMVKVEKHCSRPL.

Positions 1-23 (MRACPFLLLLLLPLLLSLGRIAA) are cleaved as a signal peptide. The cysteines at positions 73 and 86 are disulfide-linked. N-linked (GlcNAc...) asparagine glycosylation is found at asparagine 89 and asparagine 145. Serine 178 (nucleophile) is an active-site residue. Residue aspartate 202 is the Charge relay system of the active site. Cysteine 262 and cysteine 282 form a disulfide bridge. Histidine 284 (charge relay system) is an active-site residue. Disulfide bonds link cysteine 307–cysteine 326 and cysteine 318–cysteine 321. 335–347 (KMRNKRNSKMYLK) contributes to the heparin binding site. The region spanning 357–492 (FHYQLKIHVF…CLKMVKVEKH (136 aa)) is the PLAT domain. Asparagine 403 is a glycosylation site (N-linked (GlcNAc...) asparagine).

Belongs to the AB hydrolase superfamily. Lipase family. In terms of assembly, head to tail homodimer. In terms of tissue distribution, expressed by the venom gland.

The protein localises to the secreted. It catalyses the reaction a triacylglycerol + H2O = a diacylglycerol + a fatty acid + H(+). Inhibited by serum. In terms of biological role, has phospholipase and triglyceride lipase activities. The sequence is that of Putative endothelial lipase from Crotalus adamanteus (Eastern diamondback rattlesnake).